We begin with the raw amino-acid sequence, 304 residues long: Syntaxin-132 (304 aa).

Methionine 1 carries the post-translational modification N-acetylmethionine. A disordered region spans residues 1-30 (MNDLLKGSFELPRGQSSREGDVELGEQQGG). Residues 1 to 275 (MNDLLKGSFE…AKSLQKNSRK (275 aa)) are Cytoplasmic-facing. Coiled coils occupy residues 34–67 (LEDFFKKVQVIDKQYDKLDKLLKKLQASHEESKS) and 129–162 (TLSLKKKLKDKMAEFQVLRENIQQEYRDVVDRRV). Positions 204–266 (LAEIQERHDA…QSGNTALQRA (63 aa)) constitute a t-SNARE coiled-coil homology domain. Residues 276–296 (WMCIAIIILLIVVAVIVVGVL) traverse the membrane as a helical; Anchor for type IV membrane protein segment. Residues 297 to 304 (KPWKNKSA) lie on the Vesicular side of the membrane.

This sequence belongs to the syntaxin family. Part of the t-SNARE complex. Widely expressed in all tissues throughout plant development.

The protein localises to the cell membrane. Its function is as follows. Vesicle trafficking protein that functions in the secretory pathway. Acts in coordination with SYP123 to mediate tip-focused membrane trafficking for root hair tip growth. Functions in root hair elongation by forming SNARE complexes with VAMP721,VAMP722 or VAMP724. Involved in cytokinesis. Acts as a cell plate-specific syntaxin, required for the fusion of vesicles at the plane of cell division. Required for secretory trafficking to the plasma membrane during interphase. Involved in the regulation of density of the H(+) ATPase proteins at the plasma membrane of root and shoot in epidermal cells. Modulation of SYP132 expression by auxin affects clathrin-sensitive H(+) ATPase traffic from the plasma membrane, and influences apoplastic acidification and plant growth. This is Syntaxin-132 from Arabidopsis thaliana (Mouse-ear cress).